Reading from the N-terminus, the 248-residue chain is Pyridoxine 5'-phosphate synthase (248 aa).

3-amino-2-oxopropyl phosphate is bound at residue Asn9. Asp11–His12 is a 1-deoxy-D-xylulose 5-phosphate binding site. Position 20 (Arg20) interacts with 3-amino-2-oxopropyl phosphate. Catalysis depends on His45, which acts as the Proton acceptor. 2 residues coordinate 1-deoxy-D-xylulose 5-phosphate: Arg47 and His52. The active-site Proton acceptor is Glu72. Thr102 is a 1-deoxy-D-xylulose 5-phosphate binding site. The Proton donor role is filled by His193. 3-amino-2-oxopropyl phosphate contacts are provided by residues Gly194 and Gly215–His216.

Belongs to the PNP synthase family. Homooctamer; tetramer of dimers.

Its subcellular location is the cytoplasm. It catalyses the reaction 3-amino-2-oxopropyl phosphate + 1-deoxy-D-xylulose 5-phosphate = pyridoxine 5'-phosphate + phosphate + 2 H2O + H(+). Its pathway is cofactor biosynthesis; pyridoxine 5'-phosphate biosynthesis; pyridoxine 5'-phosphate from D-erythrose 4-phosphate: step 5/5. Functionally, catalyzes the complicated ring closure reaction between the two acyclic compounds 1-deoxy-D-xylulose-5-phosphate (DXP) and 3-amino-2-oxopropyl phosphate (1-amino-acetone-3-phosphate or AAP) to form pyridoxine 5'-phosphate (PNP) and inorganic phosphate. This Hydrogenovibrio crunogenus (strain DSM 25203 / XCL-2) (Thiomicrospira crunogena) protein is Pyridoxine 5'-phosphate synthase.